We begin with the raw amino-acid sequence, 598 residues long: Auxin response factor 22 (598 aa).

Residues 124–226 (NSFTKVLTAS…ELRVGIRRAG (103 aa)) constitute a DNA-binding region (TF-B3). Positions 509 to 590 (RTCTKVQMQG…MVKKILIFKR (82 aa)) constitute a PB1 domain.

The protein belongs to the ARF family. As to quaternary structure, homodimers and heterodimers.

It localises to the nucleus. Functionally, auxin response factors (ARFs) are transcriptional factors that bind specifically to the DNA sequence 5'-TGTCTC-3' found in the auxin-responsive promoter elements (AuxREs). Could act as transcriptional activator or repressor. Formation of heterodimers with Aux/IAA proteins may alter their ability to modulate early auxin response genes expression. The chain is Auxin response factor 22 (ARF22) from Arabidopsis thaliana (Mouse-ear cress).